Consider the following 416-residue polypeptide: Probable pectate lyase 8 (416 aa).

A signal peptide spans 1 to 24 (MAVTKLILFASALLLTALFIGVNA). Residues Asn-23, Asn-28, and Asn-52 are each glycosylated (N-linked (GlcNAc...) asparagine). Ca(2+) contacts are provided by Asp-214, Asp-238, and Asp-242. Residue Arg-294 is part of the active site.

This sequence belongs to the polysaccharide lyase 1 family. It depends on Ca(2+) as a cofactor.

The enzyme catalyses Eliminative cleavage of (1-&gt;4)-alpha-D-galacturonan to give oligosaccharides with 4-deoxy-alpha-D-galact-4-enuronosyl groups at their non-reducing ends.. It participates in glycan metabolism; pectin degradation; 2-dehydro-3-deoxy-D-gluconate from pectin: step 2/5. This Arabidopsis thaliana (Mouse-ear cress) protein is Probable pectate lyase 8.